We begin with the raw amino-acid sequence, 447 residues long: Tubulin beta-2 chain (447 aa).

Residues Gln-9, Glu-67, Ser-136, Gly-140, Thr-141, Gly-142, Asn-202, and Asn-224 each coordinate GTP. Mg(2+) is bound at residue Glu-67. The segment covering 411–425 (SNMNDLVSEYQQYQD) has biased composition (polar residues). Positions 411 to 447 (SNMNDLVSEYQQYQDATAEEDEYEEEEEDYHQEHDEM) are disordered. Acidic residues predominate over residues 427–440 (TAEEDEYEEEEEDY).

Belongs to the tubulin family. In terms of assembly, dimer of alpha and beta chains. A typical microtubule is a hollow water-filled tube with an outer diameter of 25 nm and an inner diameter of 15 nM. Alpha-beta heterodimers associate head-to-tail to form protofilaments running lengthwise along the microtubule wall with the beta-tubulin subunit facing the microtubule plus end conferring a structural polarity. Microtubules usually have 13 protofilaments but different protofilament numbers can be found in some organisms and specialized cells. Mg(2+) serves as cofactor.

The protein localises to the cytoplasm. Its subcellular location is the cytoskeleton. Its function is as follows. Tubulin is the major constituent of microtubules, a cylinder consisting of laterally associated linear protofilaments composed of alpha- and beta-tubulin heterodimers. Microtubules grow by the addition of GTP-tubulin dimers to the microtubule end, where a stabilizing cap forms. Below the cap, tubulin dimers are in GDP-bound state, owing to GTPase activity of alpha-tubulin. The protein is Tubulin beta-2 chain (TUBB2) of Pisum sativum (Garden pea).